The primary structure comprises 466 residues: 3-isopropylmalate dehydratase large subunit (466 aa).

[4Fe-4S] cluster is bound by residues Cys-347, Cys-407, and Cys-410.

It belongs to the aconitase/IPM isomerase family. LeuC type 1 subfamily. Heterodimer of LeuC and LeuD. It depends on [4Fe-4S] cluster as a cofactor.

The catalysed reaction is (2R,3S)-3-isopropylmalate = (2S)-2-isopropylmalate. Its pathway is amino-acid biosynthesis; L-leucine biosynthesis; L-leucine from 3-methyl-2-oxobutanoate: step 2/4. Its function is as follows. Catalyzes the isomerization between 2-isopropylmalate and 3-isopropylmalate, via the formation of 2-isopropylmaleate. In Serratia proteamaculans (strain 568), this protein is 3-isopropylmalate dehydratase large subunit.